The following is a 146-amino-acid chain: MIERDGAPTFEDVQELLNRSELTDVALYEHAGRRVDDAVDDEFSLQVLTRVGDTEFEIRCKVTAAGHGGQYLADAGAVFTLQSAAKIEEGTAREFAEKVGVMAVYPYLRAAVSQSAASLGLDRPILPLLRAGGVKLTESMDSAEDA.

Belongs to the SecB-like family.

Chaperone component of an orphan antitoxin chaperone (AC) system; there is no toxin gene in close genomic proximity. When expressed in E.coli complements the cold-sensitive phenotype of a secB deletion, suggesting it may have a generic chaperone function. Does not however complement the toxin-neutralizing effect of its M.tuberculosis paralog Rv1957 (AC P95257) in E.coli, probably because the antitoxin genes are not from the same family. This Mycolicibacterium smegmatis (strain ATCC 700084 / mc(2)155) (Mycobacterium smegmatis) protein is SecB-like chaperone SmegB.